The primary structure comprises 1881 residues: Kinesin-like protein KIF26A (1881 aa).

Disordered regions lie at residues 20 to 66 (PARE…AGGG), 145 to 193 (PASH…PPGP), and 309 to 330 (ASKR…STYP). A Phosphoserine modification is found at serine 30. A Kinesin motor domain is found at 364-718 (KVKVMLRIWP…VQLAARIHRL (355 aa)). Position 462–469 (462–469 (GHMSLGKS)) interacts with ATP. Disordered regions lie at residues 718-778 (LRRK…SSEQ), 794-827 (SDRE…RDAD), 846-982 (GSEA…QAAL), 1078-1104 (YTSQ…GSPA), 1118-1266 (LSES…PRLP), 1328-1425 (SGSL…PYRP), 1442-1633 (SKVR…SGEL), and 1652-1698 (YESM…TGLQ). The segment covering 742 to 751 (RRPPHLRPFH) has biased composition (basic residues). Basic and acidic residues predominate over residues 818 to 827 (RPSEGPRDAD). The segment covering 905 to 915 (SDPSKTGTQSE) has biased composition (polar residues). Positions 940–950 (LPSPAPPPPRQ) are enriched in pro residues. The span at 1084-1095 (EGPGDPGEFPEG) shows a compositional bias: low complexity. Residues 1151-1162 (EESKVRSSECGR) are compositionally biased toward basic and acidic residues. Serine 1257 bears the Phosphoserine mark. Residues 1328 to 1353 (SGSLKTTSGSKKSVSPKGAFFPRPSG) show a composition bias toward low complexity. Polar residues predominate over residues 1366–1378 (LEQSTALTPTQAL). The span at 1390-1399 (RGEEEARPSG) shows a compositional bias: basic and acidic residues. Positions 1400–1412 (RSDSSVPKATSSL) are enriched in polar residues. 3 stretches are compositionally biased toward low complexity: residues 1477 to 1489 (PAKG…PPAG), 1524 to 1537 (PGPR…PGIG), and 1575 to 1587 (WGST…NDSG). The span at 1616 to 1629 (RYSSGHGSDNSSVL) shows a compositional bias: polar residues. The residue at position 1654 (serine 1654) is a Phosphoserine. The span at 1664–1675 (SASSAPDSMSES) shows a compositional bias: low complexity. Residues 1685–1698 (RSLKSPKKRATGLQ) show a composition bias toward basic residues. Residues 1780 to 1812 (LRLAERRQQRLQEVQAKRDHLCEELAETQGRLM) adopt a coiled-coil conformation.

The protein belongs to the TRAFAC class myosin-kinesin ATPase superfamily. Kinesin family. KIF26 subfamily. In terms of assembly, interacts with GRB2 (via SH2 domain). In terms of tissue distribution, expressed in several neuronal populations.

Its subcellular location is the cytoplasm. It localises to the cytoskeleton. Atypical kinesin that plays a key role in enteric neuron development. Acts by repressing a cell growth signaling pathway in the enteric nervous system development, possibly via its interaction with GRB2 that prevents GRB2-binding to SHC, thereby attenating the GDNF-Ret signaling. Binds to microtubules but lacks microtubule-based motility due to the absence of ATPase activity. Plays a critical role in cerebral cortical development. It probably acts as a microtubule stabilizer that regulates neurite growth and radial migration of cortical excitatory neurons. The protein is Kinesin-like protein KIF26A (Kif26a) of Mus musculus (Mouse).